Consider the following 1489-residue polypeptide: MSLAVLLNKEDKDISDFSKTTAGKSAKKNSRERVADVAPTRVLDKKQAYLSQLNSEFNRIKRRDSIEQLYQDWKFINLQEFELISEWNQQSKDWQFDNTNDSQDLHFKKLYRDMSMINKEWAEYQSFKNANLSDIINEKDADEDEEDDEDELEDGEEDMEEDEASTGRHTNGKSMRGNGIQKSRKKDAAAAAAIGKAIKDDQTHADTVVTVNGDENEDGNNGEDEDNDNDNENNNDNDNDNENENDNDSDNDDEEENGEEDEEEEEIEDLDEEDFAAFEEQDDNDDEDFNPDVEKRRKRSSSSSSSTKLSMNSLSLITSKKINKNITINSDRPKIVRELIKMCNKNKHQKIKKRRFTNCIVTDYNPIDSKLNIKITLKQYHVKRLKKLINDAKREREREEALKNNVGLDGNDLDNDEDGSESHKRRKLNNNTANGADDANKRKFNTRHGLPTYGMKMNAKEARAIQRHYDNTYTTIWKDMARKDSTKMSRLVQQIQSIRSTNFRKTSSLCAREAKKWQSKNFKQIKDFQTRARRGIREMSNFWKKNEREERDLKKKIEKEAMEQAKKEEEEKESKRQAKKLNFLLTQTELYSHFIGRKIKTNELEGNNVSSNDSESQKNIDISALAPNKNDFHAIDFDNENDEQLRLRAAENASNALAETRAKAKQFDDHANAHEEEEEEDELNFQNPTSLGEITIEQPKILACTLKEYQLKGLNWLANLYDQGINGILADEMGLGKTVQSISVLAHLAENHNIWGPFLVVTPASTLHNWVNEISKFLPQFKILPYWGNANDRKVLRKFWDRKNLRYNKNAPFHVMVTSYQMVVTDANYLQKMKWQYMILDEAQAIKSSQSSRWKNLLSFHCRNRLLLTGTPIQNSMQELWALLHFIMPSLFDSHDEFNEWFSKDIESHAEANTKLNQQQLRRLHMILKPFMLRRVKKNVQSELGDKIEIDVLCDLTQRQAKLYQVLKSQISTNYDAIENAATNDSTSNSASNSGSDQNLINAVMQFRKVCNHPDLFERADVDSPFSFTTFGKTTSMLTASVANNNSSVISNSNMNLSSMSSNNISNGKFTDLIYSSRNPIKYSLPRLIYEDLILPNYNNDVDIANKLKNVKFNIFNPSTNYELCLFLSKLTGEPSLNEFFRVSTTPLLKRVIERTNGPKNTDSLSFKTITQELLEVTRNAPSEGVMASLLNVEKHAYEREYLNCIQRGYHPNVSAPPVTIEVLGSSHVTNSINNELFDPLISQALSDIPAITQYNMHVKKGIPVEDFPKTGLFPEPLNKNFSSNISMPSMDRFITESAKLRKLDELLVKLKSEGHRVLIYFQMTKMMDLMEEYLTYRQYNHIRLDGSSKLEDRRDLVHDWQTNPEIFVFLLSTRAGGLGINLTAADTVIFYDSDWNPTIDSQAMDRAHRLGQTRQVTVYRLLVRGTIEERMRDRAKQKEQVQQVVMEGKTQEKNIKTIEVGENDSEVTREGSKSISQDGIKEAASALA.

Serine 65, serine 115, and serine 133 each carry phosphoserine. Disordered regions lie at residues 137-311 (NEKD…KLSM) and 393-452 (KRER…GLPT). Composition is skewed to acidic residues over residues 140–164 (DADE…EDEA) and 214–291 (DENE…DFNP). The segment covering 301–311 (SSSSSSTKLSM) has biased composition (low complexity). Positions 393–402 (KREREREEAL) are enriched in basic and acidic residues. Residues 476-601 (IWKDMARKDS…SHFIGRKIKT (126 aa)) form the DBINO domain. Serine 610 is subject to Phosphoserine. Residues 718-890 (ANLYDQGING…WALLHFIMPS (173 aa)) enclose the Helicase ATP-binding domain. Residue 731-738 (DEMGLGKT) participates in ATP binding. The short motif at 841–844 (DEAQ) is the DEAQ box element. A Helicase C-terminal domain is found at 1303–1467 (KLDELLVKLK…TIEVGENDSE (165 aa)). The tract at residues 1456–1489 (IKTIEVGENDSEVTREGSKSISQDGIKEAASALA) is disordered.

This sequence belongs to the SNF2/RAD54 helicase family. In terms of assembly, component of the chromatin-remodeling INO80 complex, at least composed of ARP4, ARP5, ARP8, RVB1, RVB2, TAF14, NHP10, IES1, IES3, IES4, IES6, ACT1, IES2, IES5 and INO80.

The protein resides in the nucleus. The catalysed reaction is ATP + H2O = ADP + phosphate + H(+). Its function is as follows. ATPase component of the INO80 complex which remodels chromatin by shifting nucleosomes and is involved in DNA repair. Its ability to induce transcription of some phosphate-responsive genes is modulated by inositol polyphosphates. The INO80 complex is involved in DNA repair by associating with 'Ser-129' phosphorylated H2A histones as a response to DNA damage. This Saccharomyces cerevisiae (strain ATCC 204508 / S288c) (Baker's yeast) protein is Chromatin-remodeling ATPase INO80 (INO80).